We begin with the raw amino-acid sequence, 642 residues long: 1-deoxy-D-xylulose-5-phosphate synthase 2 (642 aa).

Residues histidine 73 and 113-115 each bind thiamine diphosphate; that span reads SHA. Aspartate 144 is a Mg(2+) binding site. Thiamine diphosphate contacts are provided by residues 145 to 146, asparagine 174, tyrosine 285, and glutamate 366; that span reads GA. Asparagine 174 contributes to the Mg(2+) binding site.

It belongs to the transketolase family. DXPS subfamily. In terms of assembly, homodimer. The cofactor is Mg(2+). Thiamine diphosphate is required as a cofactor.

It catalyses the reaction D-glyceraldehyde 3-phosphate + pyruvate + H(+) = 1-deoxy-D-xylulose 5-phosphate + CO2. It participates in metabolic intermediate biosynthesis; 1-deoxy-D-xylulose 5-phosphate biosynthesis; 1-deoxy-D-xylulose 5-phosphate from D-glyceraldehyde 3-phosphate and pyruvate: step 1/1. Catalyzes the acyloin condensation reaction between C atoms 2 and 3 of pyruvate and glyceraldehyde 3-phosphate to yield 1-deoxy-D-xylulose-5-phosphate (DXP). This Streptomyces coelicolor (strain ATCC BAA-471 / A3(2) / M145) protein is 1-deoxy-D-xylulose-5-phosphate synthase 2.